The following is a 505-amino-acid chain: Probable bifunctional methylthioribulose-1-phosphate dehydratase/enolase-phosphatase E1 (505 aa).

The tract at residues 1 to 237 (MGLDKDGISN…ALKLHQLGLD (237 aa)) is methylthioribulose-1-phosphate dehydratase. Substrate is bound at residue C109. Zn(2+) contacts are provided by H127 and H129. E152 functions as the Proton donor/acceptor; for methylthioribulose-1-phosphate dehydratase activity in the catalytic mechanism. H202 lines the Zn(2+) pocket. Residues 266-505 (FVLDIEGTTT…FRTAKSLLEL (240 aa)) form an enolase-phosphatase E1 region. Positions 269 and 271 each coordinate Mg(2+). Substrate-binding positions include 404 to 405 (SS) and K438. Mg(2+) is bound at residue D464.

It in the N-terminal section; belongs to the aldolase class II family. MtnB subfamily. The protein in the C-terminal section; belongs to the HAD-like hydrolase superfamily. MasA/MtnC family. Zn(2+) is required as a cofactor. It depends on Mg(2+) as a cofactor.

The catalysed reaction is 5-(methylsulfanyl)-D-ribulose 1-phosphate = 5-methylsulfanyl-2,3-dioxopentyl phosphate + H2O. The enzyme catalyses 5-methylsulfanyl-2,3-dioxopentyl phosphate + H2O = 1,2-dihydroxy-5-(methylsulfanyl)pent-1-en-3-one + phosphate. The protein operates within amino-acid biosynthesis; L-methionine biosynthesis via salvage pathway; L-methionine from S-methyl-5-thio-alpha-D-ribose 1-phosphate: step 2/6. Its pathway is amino-acid biosynthesis; L-methionine biosynthesis via salvage pathway; L-methionine from S-methyl-5-thio-alpha-D-ribose 1-phosphate: step 3/6. It functions in the pathway amino-acid biosynthesis; L-methionine biosynthesis via salvage pathway; L-methionine from S-methyl-5-thio-alpha-D-ribose 1-phosphate: step 4/6. The polypeptide is Probable bifunctional methylthioribulose-1-phosphate dehydratase/enolase-phosphatase E1 (Physcomitrium patens (Spreading-leaved earth moss)).